A 297-amino-acid chain; its full sequence is Putative lipid kinase MamU (297 aa).

Positions 43–131 constitute a DAGKc domain; it reads EGKDMGRMVR…MDVGRVNDRY (89 aa). 68-74 contacts ATP; that stretch reads GDGSLSR. The Proton acceptor role is filled by glutamate 274.

It belongs to the diacylglycerol/lipid kinase family.

It is found in the cytoplasm. Functionally, might phosphorylate lipids. The protein is Putative lipid kinase MamU of Magnetospirillum gryphiswaldense (strain DSM 6361 / JCM 21280 / NBRC 15271 / MSR-1).